Here is a 101-residue protein sequence, read N- to C-terminus: Small ribosomal subunit protein uS14 (101 aa).

Belongs to the universal ribosomal protein uS14 family. Part of the 30S ribosomal subunit. Contacts proteins S3 and S10.

Binds 16S rRNA, required for the assembly of 30S particles and may also be responsible for determining the conformation of the 16S rRNA at the A site. The chain is Small ribosomal subunit protein uS14 from Marinobacter nauticus (strain ATCC 700491 / DSM 11845 / VT8) (Marinobacter aquaeolei).